The primary structure comprises 284 residues: Probable palmitoyltransferase ZDHHC24 (284 aa).

The Cytoplasmic segment spans residues 1-18; that stretch reads MGEPWAARGTEGAPARMP. Residues 19 to 39 form a helical membrane-spanning segment; that stretch reads VVFTALWAAVVVLELTYVMVL. Over 40–52 the chain is Extracellular; sequence GPGPPPLEPLARA. Residues 53-73 form a helical membrane-spanning segment; that stretch reads LQLALAAYQLLNLLGNMGLFL. Topologically, residues 74–137 are cytoplasmic; the sequence is RSDPSIRGVM…GRCVGFHNYR (64 aa). The 51-residue stretch at 94-144 folds into the DHHC domain; it reads AYCYQCQSQVPPRSGHCSACRVCILRRDHHCRLLGRCVGFHNYRPFLCLLL. C124 acts as the S-palmitoyl cysteine intermediate in catalysis. The helical transmembrane segment at 138-158 threads the bilayer; the sequence is PFLCLLLHAAGVLLHISVLLS. At 159–166 the chain is on the extracellular side; that stretch reads PALSALLQ. The helical transmembrane segment at 167 to 187 threads the bilayer; sequence AHSALYTVALLLLPWLMLLTG. The Cytoplasmic portion of the chain corresponds to 188 to 195; it reads KVSLAQFA. The chain crosses the membrane as a helical span at residues 196 to 216; it reads LAFVVDTCVAGALLCGAGLLF. At 217–284 the chain is on the extracellular side; it reads HGMLLLRGQT…TPTDVGLVTS (68 aa).

Belongs to the DHHC palmitoyltransferase family.

It is found in the membrane. The catalysed reaction is L-cysteinyl-[protein] + hexadecanoyl-CoA = S-hexadecanoyl-L-cysteinyl-[protein] + CoA. Probable palmitoyltransferase that could catalyze the addition of palmitate onto various protein substrates. The sequence is that of Probable palmitoyltransferase ZDHHC24 (Zdhhc24) from Rattus norvegicus (Rat).